The primary structure comprises 252 residues: tRNA (guanine-N(1)-)-methyltransferase (252 aa).

S-adenosyl-L-methionine-binding positions include glycine 113 and 133 to 138; that span reads LGDYVL.

This sequence belongs to the RNA methyltransferase TrmD family. In terms of assembly, homodimer.

Its subcellular location is the cytoplasm. The catalysed reaction is guanosine(37) in tRNA + S-adenosyl-L-methionine = N(1)-methylguanosine(37) in tRNA + S-adenosyl-L-homocysteine + H(+). In terms of biological role, specifically methylates guanosine-37 in various tRNAs. In Stenotrophomonas maltophilia (strain R551-3), this protein is tRNA (guanine-N(1)-)-methyltransferase.